The chain runs to 521 residues: Probable ATP-dependent RNA helicase Dbp45A (521 aa).

The short motif at 7–35 is the Q motif element; the sequence is NPFQILGLRPWLVKQLTKLGLKGATPIQQ. Positions 38–209 constitute a Helicase ATP-binding domain; that stretch reads IPAILAGQDC…IFPIASDCFE (172 aa). 51-58 contacts ATP; it reads AKTGSGKT. The short motif at 157-160 is the DEAD box element; sequence DEAD. Residues 237–386 form the Helicase C-terminal domain; that stretch reads VLIEALRKYR…EHPIDQRMVE (150 aa). The disordered stretch occupies residues 448–521; sequence KRKLQHAEPA…GRADVKKDKA (74 aa). Basic and acidic residues-rich tracts occupy residues 460–482 and 502–521; these read EEGK…FEKK and LNKE…KDKA.

Belongs to the DEAD box helicase family. DDX49/DBP8 subfamily.

The enzyme catalyses ATP + H2O = ADP + phosphate + H(+). Functionally, probable ATP-binding RNA helicase. In Drosophila melanogaster (Fruit fly), this protein is Probable ATP-dependent RNA helicase Dbp45A (Dbp45A).